The sequence spans 246 residues: 3-deoxy-manno-octulosonate cytidylyltransferase (246 aa).

Belongs to the KdsB family.

The protein resides in the cytoplasm. It carries out the reaction 3-deoxy-alpha-D-manno-oct-2-ulosonate + CTP = CMP-3-deoxy-beta-D-manno-octulosonate + diphosphate. Its pathway is nucleotide-sugar biosynthesis; CMP-3-deoxy-D-manno-octulosonate biosynthesis; CMP-3-deoxy-D-manno-octulosonate from 3-deoxy-D-manno-octulosonate and CTP: step 1/1. It functions in the pathway bacterial outer membrane biogenesis; lipopolysaccharide biosynthesis. Its function is as follows. Activates KDO (a required 8-carbon sugar) for incorporation into bacterial lipopolysaccharide in Gram-negative bacteria. The chain is 3-deoxy-manno-octulosonate cytidylyltransferase from Bradyrhizobium sp. (strain ORS 278).